We begin with the raw amino-acid sequence, 215 residues long: Cytochrome b6 (215 aa).

The chain crosses the membrane as a helical span at residues 32–52 (IFYCLGGITLTCFLVQVASGF). Residue cysteine 35 coordinates heme c. Residues histidine 86 and histidine 100 each coordinate heme b. 3 helical membrane passes run 90–110 (ASMM…TGGF), 116–136 (LTWV…VTGY), and 186–206 (LHTF…FLMI). Histidine 187 and histidine 202 together coordinate heme b.

The protein belongs to the cytochrome b family. PetB subfamily. In terms of assembly, the 4 large subunits of the cytochrome b6-f complex are cytochrome b6, subunit IV (17 kDa polypeptide, PetD), cytochrome f and the Rieske protein, while the 4 small subunits are PetG, PetL, PetM and PetN. The complex functions as a dimer. Requires heme b as cofactor. Heme c serves as cofactor.

Its subcellular location is the plastid. The protein resides in the chloroplast thylakoid membrane. Component of the cytochrome b6-f complex, which mediates electron transfer between photosystem II (PSII) and photosystem I (PSI), cyclic electron flow around PSI, and state transitions. This chain is Cytochrome b6, found in Anthoceros angustus (Hornwort).